Consider the following 269-residue polypeptide: 3-methyl-2-oxobutanoate hydroxymethyltransferase (269 aa).

The Mg(2+) site is built by D42 and D81. Residues 42–43 (DS), D81, and K111 contribute to the 3-methyl-2-oxobutanoate site. Residue E113 coordinates Mg(2+). The active-site Proton acceptor is the E179. The interval 250-269 (SGEFPRESHSHTEDELDDLY) is disordered. Over residues 252–262 (EFPRESHSHTE) the composition is skewed to basic and acidic residues.

It belongs to the PanB family. As to quaternary structure, homodecamer; pentamer of dimers. It depends on Mg(2+) as a cofactor.

It is found in the cytoplasm. It carries out the reaction 3-methyl-2-oxobutanoate + (6R)-5,10-methylene-5,6,7,8-tetrahydrofolate + H2O = 2-dehydropantoate + (6S)-5,6,7,8-tetrahydrofolate. It functions in the pathway cofactor biosynthesis; coenzyme A biosynthesis. In terms of biological role, catalyzes the reversible reaction in which hydroxymethyl group from 5,10-methylenetetrahydrofolate is transferred onto alpha-ketoisovalerate to form ketopantoate. The chain is 3-methyl-2-oxobutanoate hydroxymethyltransferase from Haloarcula marismortui (strain ATCC 43049 / DSM 3752 / JCM 8966 / VKM B-1809) (Halobacterium marismortui).